Reading from the N-terminus, the 203-residue chain is Hypoxanthine-guanine phosphoribosyltransferase (203 aa).

The diphosphate site is built by Lys-66 and Gly-67. Positions 122 and 123 each coordinate Mg(2+). The active-site Proton acceptor is the Asp-126. Residues Lys-154, 175–176, and Asp-182 each bind GMP; that span reads FV. Arg-188 lines the diphosphate pocket.

It belongs to the purine/pyrimidine phosphoribosyltransferase family. Mg(2+) serves as cofactor.

It is found in the cytoplasm. It carries out the reaction IMP + diphosphate = hypoxanthine + 5-phospho-alpha-D-ribose 1-diphosphate. The catalysed reaction is GMP + diphosphate = guanine + 5-phospho-alpha-D-ribose 1-diphosphate. It participates in purine metabolism; IMP biosynthesis via salvage pathway; IMP from hypoxanthine: step 1/1. It functions in the pathway purine metabolism; GMP biosynthesis via salvage pathway; GMP from guanine: step 1/1. Purine salvage pathway enzyme that catalyzes the transfer of the ribosyl-5-phosphate group from 5-phospho-alpha-D-ribose 1-diphosphate (PRPP) to the N9 position of the 6-oxopurines hypoxanthine and guanine to form the corresponding ribonucleotides IMP (inosine 5'-monophosphate) and GMP (guanosine 5'-monophosphate), with the release of PPi. In Mycobacterium avium, this protein is Hypoxanthine-guanine phosphoribosyltransferase (hpt).